The sequence spans 593 residues: Glyoxylate carboligase (593 aa).

Belongs to the TPP enzyme family. Homotetramer. The cofactor is Mg(2+). Thiamine diphosphate is required as a cofactor.

It catalyses the reaction 2 glyoxylate + H(+) = 2-hydroxy-3-oxopropanoate + CO2. It functions in the pathway organic acid metabolism; glycolate degradation; 3-phospho-D-glycerate from glycolate: step 2/4. Its function is as follows. Catalyzes the condensation of two molecules of glyoxylate to give 2-hydroxy-3-oxopropanoate (also termed tartronate semialdehyde). The protein is Glyoxylate carboligase (gcl) of Escherichia coli O157:H7.